The following is a 619-amino-acid chain: Cationic amino acid transporter 3 (619 aa).

The Cytoplasmic segment spans residues 1–36; sequence MPWQAFRRFGQKLVRRRTLESGMAETRLARCLSTLD. The chain crosses the membrane as a helical span at residues 37–57; the sequence is LVALGVGSTLGAGVYVLAGEV. Topologically, residues 58–61 are extracellular; that stretch reads AKDK. Residues 62 to 82 traverse the membrane as a helical segment; sequence AGPSIVICFLVAALSSVLAGL. Over 83-107 the chain is Cytoplasmic; that stretch reads CYAEFGARVPRSGSAYLYSYVTVGE. The helical transmembrane segment at 108–128 threads the bilayer; the sequence is LWAFTTGWNLILSYVIGTASV. Residues 129 to 162 are Extracellular-facing; sequence ARAWSSAFDNLIGNHISKTLQGSIALHVPHVLAE. The chain crosses the membrane as a helical span at residues 163-183; that stretch reads YPDFFALGLVLLLTGLLALGA. The Cytoplasmic segment spans residues 184–191; sequence SESALVTK. The helical transmembrane segment at 192–212 threads the bilayer; that stretch reads VFTGVNLLVLGFVMISGFVKG. The Extracellular portion of the chain corresponds to 213-233; sequence DVHNWKLTEEDYELAMAELND. N-linked (GlcNAc...) asparagine glycosylation is present at Asn232. The helical transmembrane segment at 234–254 threads the bilayer; that stretch reads TYSLGPLGSGGFVPFGFEGIL. Residues 255-285 lie on the Cytoplasmic side of the membrane; it reads RGAATCFYAFVGFDCIATTGEEAQNPQRSIP. Residues 286–306 traverse the membrane as a helical segment; it reads MGIVISLSVCFLAYFAVSSAL. Over 307–335 the chain is Extracellular; sequence TLMMPYYQLQPESPLPEAFLYIGWAPARY. Residues 336–356 form a helical membrane-spanning segment; the sequence is VVAVGSLCALSTSLLGSMFPM. Topologically, residues 357–382 are cytoplasmic; sequence PRVIYAMAEDGLLFRVLARIHTGTRT. Residues 383–403 form a helical membrane-spanning segment; that stretch reads PIIATVVSGIIAAFMAFLFKL. The Extracellular portion of the chain corresponds to 404–406; sequence TDL. A helical transmembrane segment spans residues 407–427; it reads VDLMSIGTLLAYSLVSICVLI. Residues 428 to 475 lie on the Cytoplasmic side of the membrane; it reads LRYQPDQETKTGEEVELQEEAITTESEKLTLWGLFFPLNSIPTPLSGQ. A helical transmembrane segment spans residues 476–496; that stretch reads IVYVCSSLLAVLLTALCLVLA. At 497-506 the chain is on the extracellular side; the sequence is QWSVPLLSGD. Residues 507-527 traverse the membrane as a helical segment; it reads LLWTAVVVLLLLLIIGIIVVI. At 528 to 540 the chain is on the cytoplasmic side; it reads WRQPQSSTPLHFK. Residues 541 to 561 form a helical membrane-spanning segment; sequence VPALPLLPLMSIFVNIYLMMQ. Residues 562-569 lie on the Extracellular side of the membrane; the sequence is MTAGTWAR. Residues 570 to 590 traverse the membrane as a helical segment; it reads FGVWMLIGFAIYFGYGIQHSL. Topologically, residues 591-619 are cytoplasmic; the sequence is EEIKSNQPSRKSRAKTVDLDPGTLYVHSV. Phosphothreonine is present on Thr606. At Ser618 the chain carries Phosphoserine.

It belongs to the amino acid-polyamine-organocation (APC) superfamily. Cationic amino acid transporter (CAT) (TC 2.A.3.3) family. Post-translationally, N-glycosylated. Highly expressed in thymus, uterus and testis. Detected at lower levels in brain, mammary gland, prostate, salivary gland and fetal spleen. In brain, highest expression in thalamus, hippocampus and amygdala.

Its subcellular location is the cell membrane. It carries out the reaction L-arginine(in) = L-arginine(out). It catalyses the reaction L-lysine(in) = L-lysine(out). The enzyme catalyses L-ornithine(in) = L-ornithine(out). Its function is as follows. Uniporter that mediates the uptake of cationic L-amino acids such as L-arginine, L-lysine and L-ornithine. The transport is sodium ions- and pH-independent, moderately trans-stimulated and is mediated by passive diffusion. The protein is Cationic amino acid transporter 3 of Homo sapiens (Human).